Reading from the N-terminus, the 362-residue chain is Tyrosine recombinase XerH (362 aa).

Residues 43–140 (ECLNELNQAC…ALLGLFSYID (98 aa)) form the Core-binding (CB) domain. The Tyr recombinase domain occupies 170–357 (KLPTHLNNEE…DKQRLEEAAS (188 aa)). Catalysis depends on residues Arg-213, Lys-239, His-309, Arg-312, and His-335. Tyr-344 functions as the O-(3'-phospho-DNA)-tyrosine intermediate in the catalytic mechanism.

Belongs to the 'phage' integrase family. XerH subfamily.

It localises to the cytoplasm. With respect to regulation, ftsK is required for recombination. Its function is as follows. Site-specific tyrosine recombinase, which acts by catalyzing the cutting and rejoining of the recombining DNA molecules. Involved in chromosome segregation. May contribute to chromosome decatenation. This chain is Tyrosine recombinase XerH, found in Helicobacter pylori (strain ATCC 700392 / 26695) (Campylobacter pylori).